The chain runs to 440 residues: MSYFEHIPAIRYEGPQSDNPLAYHHYDAEKRVLGKTLAEHLRIAVCYWHTFVWPGHDIFGQGAFQRPWQQPGDALERARLKADAAFEFFTKLGTPFYTFHDTDVAPEGDSLREYAANFARMVDYLGERQQASGVRLLWGTANLFSHPRFAAGAATNPNPDVFAWAAAQVCHALDATHRLGGENYVLWGGREGYETLLNTDLKRERDQFARFLSMVVEHKHRIGFKGALLIEPKPQEPTKHQYDYDVATVHGFLVQYGLQNEIRVNIEANHATLAGHSFHHEIANAFALGVFGSVDANRGDPQNGWDTDQFPNSVEELTLAFYEILRHGGFTTGGMNFDAKVRRQSVDPEDLFYGHVGAIDVLALALERAAVLVENDRLDALRRQRYAQWDDAFGQKILSGGYTLQSLAEDALARGVDPRHASGAQERLENIVNQAIYGLR.

Catalysis depends on residues histidine 100 and aspartate 103. Mg(2+) is bound by residues glutamate 231, glutamate 267, histidine 270, aspartate 295, aspartate 306, aspartate 308, and aspartate 338.

Belongs to the xylose isomerase family. In terms of assembly, homotetramer. Mg(2+) serves as cofactor.

The protein localises to the cytoplasm. The catalysed reaction is alpha-D-xylose = alpha-D-xylulofuranose. The protein is Xylose isomerase of Burkholderia ambifaria (strain MC40-6).